The chain runs to 434 residues: UDP-N-acetylmuramate--L-alanine ligase (434 aa).

108-114 (GSHGKTT) is a binding site for ATP.

The protein belongs to the MurCDEF family.

The protein localises to the cytoplasm. The enzyme catalyses UDP-N-acetyl-alpha-D-muramate + L-alanine + ATP = UDP-N-acetyl-alpha-D-muramoyl-L-alanine + ADP + phosphate + H(+). Its pathway is cell wall biogenesis; peptidoglycan biosynthesis. Functionally, cell wall formation. The protein is UDP-N-acetylmuramate--L-alanine ligase of Geobacillus kaustophilus (strain HTA426).